The chain runs to 432 residues: Glutamate-1-semialdehyde 2,1-aminomutase (432 aa).

Position 271 is an N6-(pyridoxal phosphate)lysine (lysine 271).

Belongs to the class-III pyridoxal-phosphate-dependent aminotransferase family. HemL subfamily. Homodimer. The cofactor is pyridoxal 5'-phosphate.

Its subcellular location is the cytoplasm. It catalyses the reaction (S)-4-amino-5-oxopentanoate = 5-aminolevulinate. It participates in porphyrin-containing compound metabolism; protoporphyrin-IX biosynthesis; 5-aminolevulinate from L-glutamyl-tRNA(Glu): step 2/2. It functions in the pathway porphyrin-containing compound metabolism; chlorophyll biosynthesis. The polypeptide is Glutamate-1-semialdehyde 2,1-aminomutase (Prochlorococcus marinus (strain MIT 9211)).